The sequence spans 240 residues: Phosphoribosylaminoimidazole-succinocarboxamide synthase (240 aa).

It belongs to the SAICAR synthetase family.

The enzyme catalyses 5-amino-1-(5-phospho-D-ribosyl)imidazole-4-carboxylate + L-aspartate + ATP = (2S)-2-[5-amino-1-(5-phospho-beta-D-ribosyl)imidazole-4-carboxamido]succinate + ADP + phosphate + 2 H(+). Its pathway is purine metabolism; IMP biosynthesis via de novo pathway; 5-amino-1-(5-phospho-D-ribosyl)imidazole-4-carboxamide from 5-amino-1-(5-phospho-D-ribosyl)imidazole-4-carboxylate: step 1/2. The protein is Phosphoribosylaminoimidazole-succinocarboxamide synthase of Coxiella burnetii (strain RSA 493 / Nine Mile phase I).